We begin with the raw amino-acid sequence, 105 residues long: Protein yippee-like At4g27740 (105 aa).

Residues 8-105 (PTYFCRNCEN…IEKLKLTKRY (98 aa)) form the Yippee domain. 4 residues coordinate Zn(2+): Cys-12, Cys-15, Cys-68, and Cys-71.

The protein belongs to the yippee family.

The protein is Protein yippee-like At4g27740 of Arabidopsis thaliana (Mouse-ear cress).